Here is a 751-residue protein sequence, read N- to C-terminus: Catalase-peroxidase 2 (751 aa).

The signal sequence occupies residues 1-27 (MFKKTVPLLSAVAIAISFSAGTGVANA). The segment at residues 115-238 (WHGAGTYRVQ…LAAVQMGLIY (124 aa)) is a cross-link (tryptophyl-tyrosyl-methioninium (Trp-Tyr) (with M-264)). H116 acts as the Proton acceptor in catalysis. Positions 238 to 264 (YVNPEGPNGKPDPLLAAKDIRDTFGRM) form a cross-link, tryptophyl-tyrosyl-methioninium (Tyr-Met) (with W-115). Residue H279 coordinates heme b.

The protein belongs to the peroxidase family. Peroxidase/catalase subfamily. As to quaternary structure, homodimer or homotetramer. Heme b serves as cofactor. In terms of processing, formation of the three residue Trp-Tyr-Met cross-link is important for the catalase, but not the peroxidase activity of the enzyme.

The enzyme catalyses H2O2 + AH2 = A + 2 H2O. The catalysed reaction is 2 H2O2 = O2 + 2 H2O. In terms of biological role, bifunctional enzyme with both catalase and broad-spectrum peroxidase activity. In Idiomarina loihiensis (strain ATCC BAA-735 / DSM 15497 / L2-TR), this protein is Catalase-peroxidase 2.